The following is a 428-amino-acid chain: Trigger factor (428 aa).

The PPIase FKBP-type domain occupies 165–240; the sequence is ADLIKLDAEG…VKEVKRMELP (76 aa).

This sequence belongs to the FKBP-type PPIase family. Tig subfamily.

It localises to the cytoplasm. It carries out the reaction [protein]-peptidylproline (omega=180) = [protein]-peptidylproline (omega=0). In terms of biological role, involved in protein export. Acts as a chaperone by maintaining the newly synthesized protein in an open conformation. Functions as a peptidyl-prolyl cis-trans isomerase. The protein is Trigger factor of Prosthecochloris aestuarii (strain DSM 271 / SK 413).